The chain runs to 487 residues: MATETVLATAVSNGKSKGCCKSGPGYATPLAAMAGPREKLIYVTALYSGTGRDKPDYLATVDVDPSSPTFSSVIHRLKMPYIGDELHHTGWNSCSSCHGDASADRRYLVLPGLISGRIYAIDTKTDPKAPSLYKVVEPKEIAEKTGLAFPHTSHCLASGDMLVSCLGDKEGNAKGNGFLLLDSDFNVKSRWDKPGHGPLFGYDFWYQPRFKTMISTSWGAPKAFSKGFNLQHVADGLYGSHLHIYQWPEGEMKQIIDLGNTGLLPLEIRFLHDPSKDTGYVGSALSSNMIRFFKNSDDTWSHEVVISVKPLKVENWILPEMPGLITDFLISLDDRFFYFVNWLHGDIRQYNIEDPKNPVLTGQIWVGGLLQKGSPYKAVGEDGNTYQFDVPQIKGKSLRAGPQMIQLSLDGKRLYATNSLFSAWDRQFYPEIMEKGSHIIQIDVDTDKGGLTLNPDFFVDFGDEPDGPALAHEMRYPGGDCTSDIWI.

At A2 the chain carries N-acetylalanine. Residues C19 and C20 each contribute to the selenite site.

Belongs to the selenium-binding protein family. In terms of tissue distribution, mostly expressed in seedlings, leaves and stems, and, to a lower extent, in flowers and roots.

In terms of biological role, required for the fusion of female gametophyte polar nuclei. This chain is Selenium-binding protein 2 (SBP2), found in Arabidopsis thaliana (Mouse-ear cress).